The following is a 551-amino-acid chain: Cytochrome c oxidase subunit 1 (551 aa).

Residues 29-49 (VIGIQYLVTSFLFFFIGGSFA) traverse the membrane as a helical segment. Fe(II)-heme a is bound at residue histidine 76. Helical transmembrane passes span 79–99 (IMIFLWIVPAGAAFANYLIPL), 113–133 (AVAFWLTPPGGILLISSFFVG), 156–176 (LWILSLLLVGTSSILGAINFV), 205–225 (LILLSTPVLASALILLSFDLI), 245–265 (LFWFYSHPAVYIMILPFFGVI), 283–303 (IAYSSLAISFLGLIVWAHHMF), 313–333 (MFFMATTMLIAVPTGIKIFSW), 348–368 (MLFAFGFLSSFMIGGLTGVMV), 382–402 (FVVGHFHYVLFGGSAFALFSG), 424–444 (FILTFIGMNLTFMPMHELGLM), and 466–486 (IGAYVLAASTIPFVINVFWSL). Cu cation is bound by residues histidine 251, tyrosine 255, histidine 300, and histidine 301. The segment at residues 251-255 (HPAVY) is a cross-link (1'-histidyl-3'-tyrosine (His-Tyr)). Histidine 386 contacts heme a3. Fe(II)-heme a is bound at residue histidine 388.

The protein belongs to the heme-copper respiratory oxidase family. Requires Cu(2+) as cofactor. Heme serves as cofactor.

The protein localises to the cell membrane. The catalysed reaction is 4 Fe(II)-[cytochrome c] + O2 + 8 H(+)(in) = 4 Fe(III)-[cytochrome c] + 2 H2O + 4 H(+)(out). It functions in the pathway energy metabolism; oxidative phosphorylation. In terms of biological role, cytochrome c oxidase is the component of the respiratory chain that catalyzes the reduction of oxygen to water. Subunits 1-3 form the functional core of the enzyme complex. CO I is the catalytic subunit of the enzyme. Electrons originating in cytochrome c are transferred via the copper A center of subunit 2 and heme A of subunit 1 to the bimetallic center formed by heme A3 and copper B. This chain is Cytochrome c oxidase subunit 1 (ctaD), found in Synechocystis sp. (strain ATCC 27184 / PCC 6803 / Kazusa).